Here is a 434-residue protein sequence, read N- to C-terminus: Serine/threonine transporter SstT (434 aa).

9 consecutive transmembrane segments (helical) span residues Ile-14–Ile-34, Phe-41–Ile-61, Phe-72–Ala-92, Ala-135–Leu-155, Thr-172–Leu-192, Leu-210–Val-230, Ile-282–Met-302, Ile-316–Ile-336, and Phe-351–Val-371. The tract at residues Lys-414–Val-434 is disordered.

The protein belongs to the dicarboxylate/amino acid:cation symporter (DAACS) (TC 2.A.23) family.

The protein localises to the cell membrane. The enzyme catalyses L-serine(in) + Na(+)(in) = L-serine(out) + Na(+)(out). The catalysed reaction is L-threonine(in) + Na(+)(in) = L-threonine(out) + Na(+)(out). In terms of biological role, involved in the import of serine and threonine into the cell, with the concomitant import of sodium (symport system). This chain is Serine/threonine transporter SstT, found in Lacticaseibacillus paracasei (strain ATCC 334 / BCRC 17002 / CCUG 31169 / CIP 107868 / KCTC 3260 / NRRL B-441) (Lactobacillus paracasei).